A 168-amino-acid chain; its full sequence is PTS system glucose-specific EIIA component (168 aa).

The 105-residue stretch at 38-142 folds into the PTS EIIA type-1 domain; sequence DEVFSNKIVG…STLTPVIISN (105 aa). 2 residues coordinate Zn(2+): His75 and His90. Catalysis depends on His90, which acts as the Tele-phosphohistidine intermediate; for EIIA activity. His90 carries the phosphohistidine; by HPr modification.

The cofactor is Zn(2+).

The protein localises to the cytoplasm. Functionally, the phosphoenolpyruvate-dependent sugar phosphotransferase system (sugar PTS), a major carbohydrate active transport system, catalyzes the phosphorylation of incoming sugar substrates concomitantly with their translocation across the cell membrane. The enzyme II complex composed of PtsG and Crr is involved in glucose transport. The sequence is that of PTS system glucose-specific EIIA component (crr) from Buchnera aphidicola subsp. Baizongia pistaciae (strain Bp).